An 85-amino-acid polypeptide reads, in one-letter code: MTFGKQADPDLTKLLDKKLAIKLNGNRTVHGILRGFDTFMNIALKDTVEVVSPTEKYEIGMVIIRGNSILLMEPLESMAYVPKTE.

One can recognise a Sm domain in the interval 6-78; sequence QADPDLTKLL…ILLMEPLESM (73 aa).

Belongs to the snRNP Sm proteins family. Core component of the spliceosomal U1, U2, U4 and U5 small nuclear ribonucleoproteins (snRNPs), the building blocks of the spliceosome. Most spliceosomal snRNPs contain a common set of Sm proteins, SNRPB, SNRPD1, SNRPD2, SNRPD3, SNRPE, SNRPF and SNRPG that assemble in a heptameric protein ring on the Sm site of the small nuclear RNA to form the core snRNP. Component of the U1 snRNP. Component of the U4/U6-U5 tri-snRNP complex. Component of the U7 snRNP complex. Component of the U11/U12 snRNPs that are part of the U12-type spliceosome.

It localises to the cytoplasm. Its subcellular location is the cytosol. The protein resides in the nucleus. Its function is as follows. Plays a role in pre-mRNA splicing as a core component of the spliceosomal U1, U2, U4 and U5 small nuclear ribonucleoproteins (snRNPs), the building blocks of the spliceosome. Component of both the pre-catalytic spliceosome B complex and activated spliceosome C complexes. Is also a component of the minor U12 spliceosome. The chain is Probable small nuclear ribonucleoprotein G (snrpG) from Dictyostelium discoideum (Social amoeba).